The chain runs to 264 residues: 3-methyl-2-oxobutanoate hydroxymethyltransferase (264 aa).

2 residues coordinate Mg(2+): D45 and D84. 3-methyl-2-oxobutanoate-binding positions include 45–46 (DS), D84, and K112. Mg(2+) is bound at residue E114. The Proton acceptor role is filled by E181.

This sequence belongs to the PanB family. As to quaternary structure, homodecamer; pentamer of dimers. Mg(2+) is required as a cofactor.

It localises to the cytoplasm. The catalysed reaction is 3-methyl-2-oxobutanoate + (6R)-5,10-methylene-5,6,7,8-tetrahydrofolate + H2O = 2-dehydropantoate + (6S)-5,6,7,8-tetrahydrofolate. It functions in the pathway cofactor biosynthesis; (R)-pantothenate biosynthesis; (R)-pantoate from 3-methyl-2-oxobutanoate: step 1/2. Functionally, catalyzes the reversible reaction in which hydroxymethyl group from 5,10-methylenetetrahydrofolate is transferred onto alpha-ketoisovalerate to form ketopantoate. This Psychromonas ingrahamii (strain DSM 17664 / CCUG 51855 / 37) protein is 3-methyl-2-oxobutanoate hydroxymethyltransferase.